The primary structure comprises 301 residues: Acetylglutamate kinase (301 aa).

Substrate is bound by residues 68–69 (GG), Arg90, and Asn195.

Belongs to the acetylglutamate kinase family. ArgB subfamily.

It localises to the cytoplasm. The enzyme catalyses N-acetyl-L-glutamate + ATP = N-acetyl-L-glutamyl 5-phosphate + ADP. The protein operates within amino-acid biosynthesis; L-arginine biosynthesis; N(2)-acetyl-L-ornithine from L-glutamate: step 2/4. Catalyzes the ATP-dependent phosphorylation of N-acetyl-L-glutamate. The protein is Acetylglutamate kinase of Pseudomonas fluorescens (strain Pf0-1).